A 386-amino-acid chain; its full sequence is Protein MGF 360-4L (386 aa).

It belongs to the asfivirus MGF 360 family.

Plays a role in virus cell tropism, and may be required for efficient virus replication in macrophages. This African swine fever virus (isolate Warthog/Namibia/Wart80/1980) (ASFV) protein is Protein MGF 360-4L.